We begin with the raw amino-acid sequence, 72 residues long: Osmotically-inducible lipoprotein B (72 aa).

Residues 1 to 23 form the signal peptide; it reads MFVTSKKMTAAVLAITLAMSLSA. Cys-24 carries the N-palmitoyl cysteine lipid modification. Residue Cys-24 is the site of S-diacylglycerol cysteine attachment.

It localises to the cell membrane. Provides resistance to osmotic stress. May be important for stationary-phase survival. This is Osmotically-inducible lipoprotein B (osmB) from Escherichia coli O157:H7.